The sequence spans 332 residues: Ketol-acid reductoisomerase (NADP(+)) (332 aa).

Residues 2–182 (AKIYHDLEVS…GATRAGVLET (181 aa)) enclose the KARI N-terminal Rossmann domain. NADP(+)-binding positions include 25–28 (YGSQ), arginine 48, serine 53, and 83–86 (DTEQ). Residue histidine 108 is part of the active site. Glycine 134 contributes to the NADP(+) binding site. Residues 183–328 (TFKEETETDL…KVIREMMPWL (146 aa)) form the KARI C-terminal knotted domain. Mg(2+) is bound by residues aspartate 191, glutamate 195, glutamate 227, and glutamate 231. Serine 252 lines the substrate pocket.

This sequence belongs to the ketol-acid reductoisomerase family. Mg(2+) is required as a cofactor.

The enzyme catalyses (2R)-2,3-dihydroxy-3-methylbutanoate + NADP(+) = (2S)-2-acetolactate + NADPH + H(+). It carries out the reaction (2R,3R)-2,3-dihydroxy-3-methylpentanoate + NADP(+) = (S)-2-ethyl-2-hydroxy-3-oxobutanoate + NADPH + H(+). It functions in the pathway amino-acid biosynthesis; L-isoleucine biosynthesis; L-isoleucine from 2-oxobutanoate: step 2/4. It participates in amino-acid biosynthesis; L-valine biosynthesis; L-valine from pyruvate: step 2/4. Its function is as follows. Involved in the biosynthesis of branched-chain amino acids (BCAA). Catalyzes an alkyl-migration followed by a ketol-acid reduction of (S)-2-acetolactate (S2AL) to yield (R)-2,3-dihydroxy-isovalerate. In the isomerase reaction, S2AL is rearranged via a Mg-dependent methyl migration to produce 3-hydroxy-3-methyl-2-ketobutyrate (HMKB). In the reductase reaction, this 2-ketoacid undergoes a metal-dependent reduction by NADPH to yield (R)-2,3-dihydroxy-isovalerate. In Dictyoglomus thermophilum (strain ATCC 35947 / DSM 3960 / H-6-12), this protein is Ketol-acid reductoisomerase (NADP(+)).